The following is a 1414-amino-acid chain: Protein KATNIP homolog (1414 aa).

7 disordered regions span residues 1 to 32, 80 to 116, 139 to 158, 712 to 731, 756 to 783, 823 to 861, and 924 to 943; these read MHGK…DEKH, QQST…PGKI, GPNT…NEDQ, VSAT…NDLT, SSSS…TFTN, KMDN…SEKY, and QQQK…SLMP. 2 stretches are compositionally biased toward basic and acidic residues: residues 10 to 32 and 86 to 101; these read RKND…DEKH and LARE…DDGC. Positions 147–158 are enriched in acidic residues; the sequence is DFESDDDMNEDQ. 2 stretches are compositionally biased toward polar residues: residues 832–843 and 924–940; these read NFSNQSSYNSDR and QQQK…NGSS.

The protein resides in the cytoplasm. It localises to the cytoskeleton. It is found in the cilium axoneme. Its subcellular location is the cilium basal body. May control cilium integrity. This is Protein KATNIP homolog from Xenopus laevis (African clawed frog).